The following is a 601-amino-acid chain: NAD(+)--arginine ADP-ribosyltransferase Chelt (601 aa).

The N-terminal stretch at 1–18 is a signal peptide; sequence MKTIISLIFIMFPLFVSA. Residues 26–43 and Glu130 contribute to the NAD(+) site; that span reads ADSRSPNEIKDLGGLYPR. Glu130 is a catalytic residue. Cys205 and Cys220 are disulfide-bonded.

It belongs to the enterotoxin A family.

The protein localises to the secreted. The enzyme catalyses L-arginyl-[protein] + NAD(+) = N(omega)-(ADP-D-ribosyl)-L-arginyl-[protein] + nicotinamide + H(+). In terms of biological role, a probable mono(ADP-ribosyl)transferase, it may ADP-ribosylate Arg in target protein(s). Upon expression in yeast cells causes cell death. The protein is NAD(+)--arginine ADP-ribosyltransferase Chelt of Vibrio cholerae.